The primary structure comprises 881 residues: Translation initiation factor IF-2 (881 aa).

Disordered regions lie at residues Arg53–Thr92 and Ala163–Pro292. The span at Glu81–Thr92 shows a compositional bias: polar residues. Over residues Glu172–Ala186 the composition is skewed to low complexity. Over residues Arg219 to Gly236 the composition is skewed to basic and acidic residues. Positions Gly254–Gly263 are enriched in low complexity. Positions Gln380–Lys549 constitute a tr-type G domain. Residues Gly389 to Thr396 form a G1 region. Residue Gly389 to Thr396 coordinates GTP. Residues Gly414–His418 form a G2 region. Residues Asp435–Gly438 are G3. Residues Asp435 to His439 and Asn489 to Asp492 each bind GTP. The interval Asn489–Asp492 is G4. Residues Ser525–Lys527 are G5.

It belongs to the TRAFAC class translation factor GTPase superfamily. Classic translation factor GTPase family. IF-2 subfamily.

The protein localises to the cytoplasm. Its function is as follows. One of the essential components for the initiation of protein synthesis. Protects formylmethionyl-tRNA from spontaneous hydrolysis and promotes its binding to the 30S ribosomal subunits. Also involved in the hydrolysis of GTP during the formation of the 70S ribosomal complex. The polypeptide is Translation initiation factor IF-2 (Stenotrophomonas maltophilia (strain K279a)).